Reading from the N-terminus, the 685-residue chain is Linoleate 9/13-lipoxygenase (685 aa).

The first 19 residues, 1 to 19 (MKRRSVLLSGVALSGTALA), serve as a signal peptide directing secretion. Residues 122–685 (ASLPASAAAQ…PSRIPASTNI (564 aa)) enclose the Lipoxygenase domain. Fe cation is bound by residues His377, His382, His555, Asn559, and Ile685.

This sequence belongs to the lipoxygenase family. In terms of assembly, monomer. Fe cation serves as cofactor.

The protein localises to the periplasm. The enzyme catalyses (9Z,12Z)-octadecadienoate + O2 = (9S)-hydroperoxy-(10E,12Z)-octadecadienoate. The catalysed reaction is (9Z)-octadecenoate + O2 = (8E,10S)-10-hydroperoxy-octadeca-8-enoate. It carries out the reaction (9Z,12Z)-octadecadienoate + O2 = (8E,10S,12Z)-10-hydroperoxyoctadeca-8,12-dienoate. It catalyses the reaction (9Z,12Z,15Z)-octadecatrienoate + O2 = (8E,10S,12Z,15Z)-10-hydroperoxyoctadeca-8,12,15-trienoate. The enzyme catalyses (9Z,12Z)-octadecadienoate + O2 = (13S)-hydroperoxy-(9Z,11E)-octadecadienoate. The catalysed reaction is (9Z,12Z,15Z)-octadecatrienoate + O2 = (13S)-hydroperoxy-(9Z,11E,15Z)-octadecatrienoate. With respect to regulation, inhibited by Ba(2+), Zn(2+) and Fe(3+). In presence of oxygen, converts linoleate into (9S)-hydroperoxy-10,12-octadecenoate (9HPOD), which spontaneously decomposes to the corresponding 9-hydroxy-10,12-octadecenoate (9HOD), and into 13-hydroperoxy-9,11-octadecenoate (13HPOD) which spontaneously decomposes to the corresponding 13-hydroxy-9,11-octadecenoate (13HOD). Also active on linolenate. To a lesser extent, is also able to convert oleate into (10S)-hydroperoxy-8E-octadecenoate, which spontaneously decomposes to the corresponding 10-hydroxy-8E-octadecenoate. Is almost not active on arachidonate. The chain is Linoleate 9/13-lipoxygenase (lox) from Pseudomonas aeruginosa.